The following is an 804-amino-acid chain: Protein-lysine N-methyltransferase SMYD4 (804 aa).

112–114 lines the S-adenosyl-L-methionine pocket; that stretch reads RSA. Positions 233 to 574 constitute an SET domain; that stretch reads SSVGLCIDPL…KGQEILHCYG (342 aa). Zn(2+) is bound by residues Cys-296, Cys-299, Cys-309, Cys-312, Cys-318, Cys-322, His-331, and Cys-335. The segment at 296 to 335 adopts an MYND-type zinc-finger fold; that stretch reads CHRCLKHTLATVPCDGCSYAKYCSQECLQQAWELYHRTEC. Residues Asn-427, 539–540, Tyr-573, and Phe-595 contribute to the S-adenosyl-L-methionine site; that span reads NH.

This sequence belongs to the class V-like SAM-binding methyltransferase superfamily. In terms of assembly, interacts (via MYND-type zinc finger) with HDAC1.

It localises to the nucleus. It is found in the cytoplasm. The enzyme catalyses L-lysyl-[protein] + S-adenosyl-L-methionine = N(6)-methyl-L-lysyl-[protein] + S-adenosyl-L-homocysteine + H(+). Its function is as follows. Protein-lysine N-methyltransferase. Monomethylates PRMT5, modulating its transcriptional activity. May also act as a histone methyltransferase. Plays a critical role in cardiac development. Acts as a key epigenetic regulator of gene expression during cardiac development via its dual activities as a methyltransferase and negative regulator of HDAC1. This chain is Protein-lysine N-methyltransferase SMYD4 (SMYD4), found in Pongo abelii (Sumatran orangutan).